We begin with the raw amino-acid sequence, 115 residues long: Large ribosomal subunit protein bL19 (115 aa).

This sequence belongs to the bacterial ribosomal protein bL19 family.

In terms of biological role, this protein is located at the 30S-50S ribosomal subunit interface and may play a role in the structure and function of the aminoacyl-tRNA binding site. The protein is Large ribosomal subunit protein bL19 of Bacillus pumilus (strain SAFR-032).